A 533-amino-acid polypeptide reads, in one-letter code: Flavin-containing monooxygenase 5 (533 aa).

Residue Arg-5 is modified to Dimethylated arginine. FAD contacts are provided by residues 10–14 (GSGAS), Glu-33, and 41–42 (LW). The residue at position 54 (Ser-54) is a Phosphoserine. A Phosphotyrosine modification is found at Tyr-56. At Ser-58 the chain carries Phosphoserine. 62–63 (NT) serves as a coordination point for FAD. 196 to 199 (SGGD) is an NADP(+) binding site. Thr-284 is modified (phosphothreonine). Phosphoserine is present on Ser-401. Residues 513-533 (LVTVRVLMLAVTFLAVILAYF) form a helical membrane-spanning segment.

This sequence belongs to the FMO family. FAD is required as a cofactor.

Its subcellular location is the microsome membrane. The protein resides in the endoplasmic reticulum membrane. The catalysed reaction is N,N-dimethylaniline + NADPH + O2 + H(+) = N,N-dimethylaniline N-oxide + NADP(+) + H2O. The enzyme catalyses NADPH + O2 + H(+) = H2O2 + NADP(+). It catalyses the reaction heptan-2-one + NADPH + O2 + H(+) = pentyl acetate + NADP(+) + H2O. It carries out the reaction octan-3-one + NADPH + O2 + H(+) = pentyl propanoate + NADP(+) + H2O. The catalysed reaction is octan-3-one + NADPH + O2 + H(+) = ethyl hexanoate + NADP(+) + H2O. The enzyme catalyses hexan-3-one + NADPH + O2 + H(+) = ethyl butanoate + NADP(+) + H2O. It catalyses the reaction hexan-3-one + NADPH + O2 + H(+) = propyl propanoate + NADP(+) + H2O. It carries out the reaction heptan-4-one + NADPH + O2 + H(+) = propyl butanoate + NADP(+) + H2O. The catalysed reaction is (2E)-geranial + NADPH + O2 + H(+) = (1E)-2,6-dimethylhepta-1,5-dien-1-yl formate + NADP(+) + H2O. The enzyme catalyses sulcatone + NADPH + O2 + H(+) = 4-methylpent-3-en-1-yl acetate + NADP(+) + H2O. Its function is as follows. Acts as a Baeyer-Villiger monooxygenase on a broad range of substrates. Catalyzes the insertion of an oxygen atom into a carbon-carbon bond adjacent to a carbonyl, which converts ketones to esters. Active on diverse carbonyl compounds, whereas soft nucleophiles are mostly non- or poorly reactive. In contrast with other forms of FMO it is non- or poorly active on 'classical' substrates such as drugs, pesticides, and dietary components containing soft nucleophilic heteroatoms. Able to oxidize drug molecules bearing a carbonyl group on an aliphatic chain, such as nabumetone and pentoxifylline. Also, in the absence of substrates, shows slow but yet significant NADPH oxidase activity. Acts as a positive modulator of cholesterol biosynthesis as well as glucose homeostasis, promoting metabolic aging via pleiotropic effects. This Rattus norvegicus (Rat) protein is Flavin-containing monooxygenase 5.